Reading from the N-terminus, the 328-residue chain is Malate dehydrogenase (328 aa).

11–17 serves as a coordination point for NAD(+); sequence GAAGQIG. Substrate is bound by residues Arg-94 and Arg-100. Residues Asn-107, Gln-114, and 131–133 each bind NAD(+); that span reads VGN. Asn-133 and Arg-164 together coordinate substrate. His-189 (proton acceptor) is an active-site residue.

This sequence belongs to the LDH/MDH superfamily. MDH type 2 family.

It catalyses the reaction (S)-malate + NAD(+) = oxaloacetate + NADH + H(+). Functionally, catalyzes the reversible oxidation of malate to oxaloacetate. This Xylella fastidiosa (strain M23) protein is Malate dehydrogenase.